Consider the following 570-residue polypeptide: Formate--tetrahydrofolate ligase (570 aa).

65–72 (TPYGEGKT) provides a ligand contact to ATP.

It belongs to the formate--tetrahydrofolate ligase family.

The catalysed reaction is (6S)-5,6,7,8-tetrahydrofolate + formate + ATP = (6R)-10-formyltetrahydrofolate + ADP + phosphate. It functions in the pathway one-carbon metabolism; tetrahydrofolate interconversion. The protein is Formate--tetrahydrofolate ligase of Shewanella piezotolerans (strain WP3 / JCM 13877).